A 795-amino-acid chain; its full sequence is Phenylalanine--tRNA ligase beta subunit (795 aa).

The tRNA-binding domain maps to 39 to 148 (AGSFNGVVVG…ADAPLGTDIR (110 aa)). Positions 401–476 (PKRATITLRR…RVYGYNNIPD (76 aa)) constitute a B5 domain. Positions 454, 460, 463, and 464 each coordinate Mg(2+). An FDX-ACB domain is found at 701-794 (SRFPANRRDI…LKERFQASLR (94 aa)).

Belongs to the phenylalanyl-tRNA synthetase beta subunit family. Type 1 subfamily. As to quaternary structure, tetramer of two alpha and two beta subunits. Mg(2+) is required as a cofactor.

The protein resides in the cytoplasm. The catalysed reaction is tRNA(Phe) + L-phenylalanine + ATP = L-phenylalanyl-tRNA(Phe) + AMP + diphosphate + H(+). The protein is Phenylalanine--tRNA ligase beta subunit of Salmonella choleraesuis (strain SC-B67).